Here is a 616-residue protein sequence, read N- to C-terminus: MPAYRSRTTTHGRNMAGARGLWRATGMKDADFGKPIIAVVNSFTQFVPGHVHLKDLGQLVAREIEQAGGVAKEFNTIAVDDGIAMGHDGMLYSLPSRELIADSVEYMANAHCADGLVCISNCDKITPGMLMAALRLNIPAVFVSGGPMEAGKVKLQGKTKAVDLIDAMVAAADSKVSDEDVKVIERSACPTCGSCSGMFTANSMNCLTEALGLALPGNGSVVATHADRKRLFVEAGHTIVDLVRRYYEQDDASVLPRNVANFKAFENAMTLDIAMGGSTNTVLHLLAAAHEGQVAFTMKDIDRLSRRVPVLCKVAPSVADVHVEDVHRAGGIMGILGELDRAGLIDTSVSTVHAPTMADALERWDIKRSKSEAVRTFYRASPGGIPTQVAFSQERRYDELDADREKGVVRDLEHAFSKDGGLAVLYGNLAQDGCIVKTAGVDASILKFSGPARVFESQDAAVEGILGGKVVAGEVVVIIYEGPRGGPGMQEMLYPTSYLKSMGLGKACALVTDGRFSGGSSGLSIGHLSPEAAEGGNIGLVRTGDLIAIDIPNRSITLEVSDEELAKRRASEEAKGDAAWQATGRKRNVSTALQAYAALTTSAARGAVREVKRRSN.

Asp81 contributes to the Mg(2+) binding site. Cys122 lines the [2Fe-2S] cluster pocket. Mg(2+) is bound by residues Asp123 and Lys124. N6-carboxylysine is present on Lys124. [2Fe-2S] cluster is bound at residue Cys195. Glu491 is a binding site for Mg(2+). Ser517 functions as the Proton acceptor in the catalytic mechanism.

This sequence belongs to the IlvD/Edd family. As to quaternary structure, homodimer. It depends on [2Fe-2S] cluster as a cofactor. Requires Mg(2+) as cofactor.

The catalysed reaction is (2R)-2,3-dihydroxy-3-methylbutanoate = 3-methyl-2-oxobutanoate + H2O. It carries out the reaction (2R,3R)-2,3-dihydroxy-3-methylpentanoate = (S)-3-methyl-2-oxopentanoate + H2O. Its pathway is amino-acid biosynthesis; L-isoleucine biosynthesis; L-isoleucine from 2-oxobutanoate: step 3/4. It functions in the pathway amino-acid biosynthesis; L-valine biosynthesis; L-valine from pyruvate: step 3/4. Functions in the biosynthesis of branched-chain amino acids. Catalyzes the dehydration of (2R,3R)-2,3-dihydroxy-3-methylpentanoate (2,3-dihydroxy-3-methylvalerate) into 2-oxo-3-methylpentanoate (2-oxo-3-methylvalerate) and of (2R)-2,3-dihydroxy-3-methylbutanoate (2,3-dihydroxyisovalerate) into 2-oxo-3-methylbutanoate (2-oxoisovalerate), the penultimate precursor to L-isoleucine and L-valine, respectively. This is Dihydroxy-acid dehydratase 1 from Bradyrhizobium diazoefficiens (strain JCM 10833 / BCRC 13528 / IAM 13628 / NBRC 14792 / USDA 110).